The chain runs to 248 residues: MTEANRILLGVNIDHVATLRQARGTRYPDPVKAALDAEEAGADGITVHLREDRRHIQDRDVRVLADVLQTRMNFEMGVTDFMLGFAEQIRPAHVCLVPETRQELTTEGGLDVAGQEARIAAAVERLTLAGCEVSLFIDAEERQIEAAMRVGAPAIELHTGRYADAHTAEEAAQELSRIRDGVICGLNHGLIVNAGHGLHYHNAEAVAAIPGINELNIGHAIVAHALFVGFKQAVAEMKALIVAAAYRG.

Asn-12 lines the 3-amino-2-oxopropyl phosphate pocket. Asp-14 to His-15 contributes to the 1-deoxy-D-xylulose 5-phosphate binding site. Arg-23 lines the 3-amino-2-oxopropyl phosphate pocket. The Proton acceptor role is filled by His-48. The 1-deoxy-D-xylulose 5-phosphate site is built by Arg-50 and His-55. Glu-75 acts as the Proton acceptor in catalysis. Thr-105 serves as a coordination point for 1-deoxy-D-xylulose 5-phosphate. The Proton donor role is filled by His-196. 3-amino-2-oxopropyl phosphate is bound by residues Gly-197 and Gly-218 to His-219.

It belongs to the PNP synthase family. As to quaternary structure, homooctamer; tetramer of dimers.

Its subcellular location is the cytoplasm. The catalysed reaction is 3-amino-2-oxopropyl phosphate + 1-deoxy-D-xylulose 5-phosphate = pyridoxine 5'-phosphate + phosphate + 2 H2O + H(+). Its pathway is cofactor biosynthesis; pyridoxine 5'-phosphate biosynthesis; pyridoxine 5'-phosphate from D-erythrose 4-phosphate: step 5/5. In terms of biological role, catalyzes the complicated ring closure reaction between the two acyclic compounds 1-deoxy-D-xylulose-5-phosphate (DXP) and 3-amino-2-oxopropyl phosphate (1-amino-acetone-3-phosphate or AAP) to form pyridoxine 5'-phosphate (PNP) and inorganic phosphate. This Ectopseudomonas mendocina (strain ymp) (Pseudomonas mendocina) protein is Pyridoxine 5'-phosphate synthase.